The chain runs to 339 residues: Ribosomal RNA small subunit methyltransferase H (339 aa).

S-adenosyl-L-methionine-binding positions include 40 to 42 (GGY), aspartate 58, phenylalanine 85, aspartate 106, and glutamine 113.

Belongs to the methyltransferase superfamily. RsmH family.

It is found in the cytoplasm. The catalysed reaction is cytidine(1402) in 16S rRNA + S-adenosyl-L-methionine = N(4)-methylcytidine(1402) in 16S rRNA + S-adenosyl-L-homocysteine + H(+). Its function is as follows. Specifically methylates the N4 position of cytidine in position 1402 (C1402) of 16S rRNA. In Parvibaculum lavamentivorans (strain DS-1 / DSM 13023 / NCIMB 13966), this protein is Ribosomal RNA small subunit methyltransferase H.